The chain runs to 257 residues: MLVVISPAKTLDFNNINETLPMTNPKFLKEAKILVEELKNYDSYSLGKLMKTSDKLSLLNKNRFDIWNESFDNSRQCLIAFKGEVFKGMDVGSFNIEDLFYTNDHLRILSGLYGVLNPFDGVNPYRLEMGTKLSFNNYKNLYDYWKDKLKYKLIEDIKSTGNNTLVNLASYEYFKSIEGIDILDTSINIVTPIFKEYRNGKYKIVTMKAKKARGLMVSFIMKNKINNIEDLKKFDLEGYLYNEDLSNNNNLVFTLEN.

This sequence belongs to the UPF0246 family.

This Clostridium botulinum (strain Eklund 17B / Type B) protein is UPF0246 protein CLL_A2361.